We begin with the raw amino-acid sequence, 859 residues long: Mycobactin import ATP-binding/permease protein IrtA (859 aa).

Over 1 to 292 (MARGLQGVML…SRLLAPLKLP (292 aa)) the chain is Cytoplasmic. The region spanning 15-122 (ARDHTATVIE…MSLMGSSRFD (108 aa)) is the FAD-binding FR-type domain. FAD-binding positions include 70-73 (RAYT), 87-91 (DVVLH), and 97-98 (AS). A disordered region spans residues 247–267 (HRATEPAATEPEVGAAPQPES). Residues 293-313 (LVLSGVLAALVTLAQLAPFVL) form a helical membrane-spanning segment. Residues 293–575 (LVLSGVLAAL…IAYGLGGLRT (283 aa)) form the ABC transmembrane type-1 domain. Residues 314–334 (LVELSRLLVSGAGAHRLFTVG) lie on the Periplasmic side of the membrane. Residues 335–355 (FAAVGLLGTGALLAAALTLWL) form a helical membrane-spanning segment. Residues 356–408 (HVIDARFARALRLRLLSKLSRLPLGWFTSRGSGSIKKLVTDDTLALHYLVTHA) lie on the Cytoplasmic side of the membrane. Residues 409 to 429 (VPDAVAAVVAPVGVLVYLFVV) form a helical membrane-spanning segment. Residues 430 to 432 (DWR) are Periplasmic-facing. Residues 433–453 (VALVLFGPVLVYLTITSSLTI) form a helical membrane-spanning segment. The Cytoplasmic portion of the chain corresponds to 454 to 519 (QSGPRIVQAQ…PLAGKKTLMD (66 aa)). Residues 520–540 (LATRPATFLWLIAATGTLLVA) traverse the membrane as a helical segment. Over 541–548 (THRMDPVN) the chain is Periplasmic. A helical membrane pass occupies residues 549–569 (LLPFMFLGTTFGARLLGIAYG). The Cytoplasmic portion of the chain corresponds to 570–859 (LGGLRTGLLA…AVAAAQDGTR (290 aa)). In terms of domain architecture, ABC transporter spans 610–843 (VVFDHVTFGY…GGRYCRLWDT (234 aa)). An ATP-binding site is contributed by 643–650 (GPSGSGKS).

This sequence belongs to the ABC transporter superfamily. Siderophore-Fe(3+) uptake transporter (SIUT) (TC 3.A.1.21) family. As to quaternary structure, forms a heterodimer with IrtB. The cofactor is FAD.

The protein localises to the cell inner membrane. In terms of biological role, part of the ABC transporter complex IrtAB involved in the import of iron-bound mycobactin (Fe-MBT) and carboxymycobactin (Fe-cMBT). Mycobactins are then reduced by the siderophore interaction domain to facilitate iron release in the bacterial cell. Transmembrane domains (TMD) form a pore in the membrane and the ATP-binding domain (NBD) is responsible for energy generation. Required for replication in human macrophages and in mouse lungs. The chain is Mycobactin import ATP-binding/permease protein IrtA (irtA) from Mycobacterium tuberculosis (strain ATCC 25618 / H37Rv).